The sequence spans 332 residues: MAVIYYDKDCDLSLIEKKLIGIVGYGAQGHAHAQNLRDSGLKVIVACVEGGRGWKKATADGFEVMCVAEMAKKADIIMMLAPDTSQAKIYKDSVEQGLKPGKMLMFAHGFNIHYGQIVPPSFVDVTMIAPKCPGYMLRQVFTEGAGAPSLIAVEQDASGKAKELALAYAKGIGSNRAGILETTFAEETETDLFGEQAVLCGGTTSLVKAGFETLVEAGYQPEVAYFECLHELKLIVDLMYQGGIAYMRDSISDTAKYGDFTRGPRVINEDTYETMGEILGEIQDGSFAKEWILENQAGRPVYNSLRRMESEHLIEEVGAELRSMMSWLKKKK.

One can recognise a KARI N-terminal Rossmann domain in the interval 1 to 182 (MAVIYYDKDC…GSNRAGILET (182 aa)). NADP(+)-binding positions include 25-28 (YGAQ) and 83-86 (DTSQ). Histidine 108 is a catalytic residue. Glycine 134 provides a ligand contact to NADP(+). The region spanning 183–328 (TFAEETETDL…AELRSMMSWL (146 aa)) is the KARI C-terminal knotted domain. Residues aspartate 191, glutamate 195, glutamate 227, and glutamate 231 each coordinate Mg(2+). Serine 252 is a binding site for substrate.

This sequence belongs to the ketol-acid reductoisomerase family. Mg(2+) serves as cofactor.

It carries out the reaction (2R)-2,3-dihydroxy-3-methylbutanoate + NADP(+) = (2S)-2-acetolactate + NADPH + H(+). It catalyses the reaction (2R,3R)-2,3-dihydroxy-3-methylpentanoate + NADP(+) = (S)-2-ethyl-2-hydroxy-3-oxobutanoate + NADPH + H(+). The protein operates within amino-acid biosynthesis; L-isoleucine biosynthesis; L-isoleucine from 2-oxobutanoate: step 2/4. It functions in the pathway amino-acid biosynthesis; L-valine biosynthesis; L-valine from pyruvate: step 2/4. Involved in the biosynthesis of branched-chain amino acids (BCAA). Catalyzes an alkyl-migration followed by a ketol-acid reduction of (S)-2-acetolactate (S2AL) to yield (R)-2,3-dihydroxy-isovalerate. In the isomerase reaction, S2AL is rearranged via a Mg-dependent methyl migration to produce 3-hydroxy-3-methyl-2-ketobutyrate (HMKB). In the reductase reaction, this 2-ketoacid undergoes a metal-dependent reduction by NADPH to yield (R)-2,3-dihydroxy-isovalerate. This Dehalococcoides mccartyi (strain ATCC BAA-2100 / JCM 16839 / KCTC 5957 / BAV1) protein is Ketol-acid reductoisomerase (NADP(+)).